The chain runs to 371 residues: MSNDSIHWEARYLPAGPPRLLGWNVPAEELIHIPEHWLVYPEPNPSLHYLLALLYILFTFLALLGNGLVIWIFCAAKSLRTPSNMFVVNLAICDFFMMIKTPIFIYNSFNTGFALGNLGCQIFAVIGSLTGIGAAITNAAIAYDRYSTIARPLDGKLSRGQVILFIVLIWTYTIPWALMPVMGVWGRFVPEGFLTSCSFDYLTDTNEIRIFVATIFTFSYCIPMILIIYYYSQIVSHVVNHEKALREQAKKMNVDSLRSNANTSSQSAEIRIAKAAITICFLYVLSWTPYGVMSMIGAFGNKALLTPGVTMIPACTCKAVACLDPYVYAISHPKYRLELQKRLPWLELQEKPISDSTSTTTETVNTPPASS.

Residues methionine 1–alanine 52 are Extracellular-facing. Asparagine 3 carries an N-linked (GlcNAc...) asparagine glycan. Residues leucine 53–phenylalanine 73 traverse the membrane as a helical segment. The Cytoplasmic portion of the chain corresponds to cysteine 74 to asparagine 84. A helical transmembrane segment spans residues methionine 85–isoleucine 105. Over tyrosine 106–glutamine 121 the chain is Extracellular. Cysteines 120 and 197 form a disulfide. Residues isoleucine 122–alanine 142 form a helical membrane-spanning segment. Residues tyrosine 143 to glutamine 161 lie on the Cytoplasmic side of the membrane. Residues valine 162–methionine 182 traverse the membrane as a helical segment. Over glycine 183–arginine 209 the chain is Extracellular. A helical transmembrane segment spans residues isoleucine 210–tyrosine 230. The Cytoplasmic segment spans residues tyrosine 231–threonine 278. The chain crosses the membrane as a helical span at residues isoleucine 279–phenylalanine 299. Over glycine 300–lysine 302 the chain is Extracellular. The helical transmembrane segment at alanine 303–leucine 323 threads the bilayer. The residue at position 318 (lysine 318) is an N6-(retinylidene)lysine. Over aspartate 324–serine 371 the chain is Cytoplasmic.

This sequence belongs to the G-protein coupled receptor 1 family. Opsin subfamily. Post-translationally, phosphorylated on some or all of the serine and threonine residues present in the C-terminal region. In terms of tissue distribution, expressed in the dorsal region of the retina.

The protein resides in the membrane. Its function is as follows. Visual pigments are the light-absorbing molecules that mediate vision. They consist of an apoprotein, opsin, covalently linked to 11-cis-retinal. The sequence is that of Opsin, ultraviolet-sensitive (UVOP) from Apis mellifera (Honeybee).